The primary structure comprises 272 residues: Methylsterol monooxygenase 2-1 (272 aa).

Transmembrane regions (helical) follow at residues 24–44 (IGSF…YIFL), 72–94 (LLLY…FRFM), and 107–127 (VVSA…YWGH). The region spanning 113–259 (LFYFIIEDFV…FVYMDWIFGT (147 aa)) is the Fatty acid hydroxylase domain. Positions 127 to 131 (HRILH) match the Histidine box-1 motif. The Histidine box-2 motif lies at 140-144 (HSVHH). The next 2 helical transmembrane spans lie at 162-182 (ILFL…HLIT) and 209-229 (NFLP…AYSA). The Histidine box-3 signature appears at 231-237 (FHDYHHR).

This sequence belongs to the sterol desaturase family. Fe cation is required as a cofactor. Strongly expressed in leaves, flowers, siliques and developing seeds.

The protein resides in the endoplasmic reticulum membrane. It catalyses the reaction 4,4-dimethyl-5alpha-cholest-7-en-3beta-ol + 6 Fe(II)-[cytochrome b5] + 3 O2 + 5 H(+) = 4alpha-carboxy-4beta-methyl-5alpha-cholest-7-ene-3beta-ol + 6 Fe(III)-[cytochrome b5] + 4 H2O. It carries out the reaction 24-methylidenelophenol + 6 Fe(II)-[cytochrome b5] + 3 O2 + 5 H(+) = 4alpha-carboxy-ergosta-7,24(24(1))-dien-3beta-ol + 6 Fe(III)-[cytochrome b5] + 4 H2O. Functionally, non-heme iron oxygenase involved in sterols biosynthesis by catalyzing the removal of the second methyl group at the C-4 position. 24-ethylidenelophenol and 24-ethyllophenol are the preferred substrates. Together with SMO2-2, required during embryogenesis, probably by maintaining sterols and auxin homeostasis. The chain is Methylsterol monooxygenase 2-1 from Arabidopsis thaliana (Mouse-ear cress).